The primary structure comprises 184 residues: Shikimate kinase (184 aa).

17–22 is an ATP binding site; the sequence is GAGKTT. Threonine 21 provides a ligand contact to Mg(2+). Residues aspartate 39, arginine 63, and glycine 85 each contribute to the substrate site. Arginine 123 is an ATP binding site. Arginine 142 contacts substrate.

The protein belongs to the shikimate kinase family. As to quaternary structure, monomer. The cofactor is Mg(2+).

The protein localises to the cytoplasm. It catalyses the reaction shikimate + ATP = 3-phosphoshikimate + ADP + H(+). It functions in the pathway metabolic intermediate biosynthesis; chorismate biosynthesis; chorismate from D-erythrose 4-phosphate and phosphoenolpyruvate: step 5/7. Its function is as follows. Catalyzes the specific phosphorylation of the 3-hydroxyl group of shikimic acid using ATP as a cosubstrate. The polypeptide is Shikimate kinase (Burkholderia lata (strain ATCC 17760 / DSM 23089 / LMG 22485 / NCIMB 9086 / R18194 / 383)).